A 606-amino-acid polypeptide reads, in one-letter code: Chaperone protein DnaK (606 aa).

At T174 the chain carries Phosphothreonine; by autocatalysis. The disordered stretch occupies residues 576–606 (QAAGSANPGGSQGTSQGNVYEADYKVEDDNK). Basic and acidic residues predominate over residues 597–606 (ADYKVEDDNK).

Belongs to the heat shock protein 70 family.

In terms of biological role, acts as a chaperone. This Caldanaerobacter subterraneus subsp. tengcongensis (strain DSM 15242 / JCM 11007 / NBRC 100824 / MB4) (Thermoanaerobacter tengcongensis) protein is Chaperone protein DnaK.